The chain runs to 136 residues: Single-stranded DNA-binding protein 1 (136 aa).

In terms of domain architecture, SSB spans 4–109; it reads LNKMQLIGNL…IMAKEMQMLG (106 aa). The interval 109–136 is disordered; it reads GKKQDNNKVGNARHGDALPADEDDYYDF. Acidic residues predominate over residues 127–136; that stretch reads PADEDDYYDF.

In terms of assembly, homotetramer.

This Xylella fastidiosa (strain 9a5c) protein is Single-stranded DNA-binding protein 1 (ssb1).